A 468-amino-acid chain; its full sequence is Aspartate ammonia-lyase (468 aa).

Residues Thr-99, Ser-138, Thr-139, Asn-140, and Thr-185 each coordinate L-aspartate. The SS loop stretch occupies residues 315–324 (GSSIMPGKVN). Ser-316 functions as the Proton acceptor in the catalytic mechanism. Ser-317 and Lys-322 together coordinate L-aspartate.

It belongs to the class-II fumarase/aspartase family. Aspartase subfamily. Homotetramer.

It catalyses the reaction L-aspartate = fumarate + NH4(+). In terms of biological role, catalyzes the reversible conversion of L-aspartate to fumarate and ammonia. In Helicobacter pylori (strain ATCC 700392 / 26695) (Campylobacter pylori), this protein is Aspartate ammonia-lyase (aspA).